The primary structure comprises 30 residues: Putative cytochrome bd-II ubiquinol oxidase subunit AppX (30 aa).

A helical transmembrane segment spans residues 4-24; it reads LLWFVGILLMCSLSTLVLVWL.

Belongs to the cytochrome ubiquinol oxidase subunit X family. As to quaternary structure, able to interact with CydA and CydB upon overexpression.

The protein localises to the cell inner membrane. Might be part of cytochrome bd-II oxidase (appB and appC). Able to restore reductant resistance to a cydX deletion mutant upon overexpression. CydX and this protein may have some functional overlap. The sequence is that of Putative cytochrome bd-II ubiquinol oxidase subunit AppX (appX) from Escherichia coli (strain K12).